A 181-amino-acid polypeptide reads, in one-letter code: Large ribosomal subunit protein uL5 (181 aa).

The protein belongs to the universal ribosomal protein uL5 family. As to quaternary structure, part of the 50S ribosomal subunit; part of the 5S rRNA/L5/L18/L25 subcomplex. Contacts the 5S rRNA and the P site tRNA. Forms a bridge to the 30S subunit in the 70S ribosome.

Its function is as follows. This is one of the proteins that bind and probably mediate the attachment of the 5S RNA into the large ribosomal subunit, where it forms part of the central protuberance. In the 70S ribosome it contacts protein S13 of the 30S subunit (bridge B1b), connecting the 2 subunits; this bridge is implicated in subunit movement. Contacts the P site tRNA; the 5S rRNA and some of its associated proteins might help stabilize positioning of ribosome-bound tRNAs. This Helicobacter pylori (strain J99 / ATCC 700824) (Campylobacter pylori J99) protein is Large ribosomal subunit protein uL5.